A 217-amino-acid polypeptide reads, in one-letter code: Adenylate kinase (217 aa).

Gly-10–Thr-15 is a binding site for ATP. Positions Ser-30–Val-59 are NMP. Residues Thr-31, Arg-36, Asp-57 to Val-59, Gly-85 to Arg-88, and Gln-92 contribute to the AMP site. Residues Gly-126–Asp-163 are LID. ATP-binding positions include Arg-127 and Thr-136–Tyr-137. AMP contacts are provided by Arg-160 and Arg-171. Gln-199 is a binding site for ATP.

The protein belongs to the adenylate kinase family. In terms of assembly, monomer.

The protein resides in the cytoplasm. It carries out the reaction AMP + ATP = 2 ADP. Its pathway is purine metabolism; AMP biosynthesis via salvage pathway; AMP from ADP: step 1/1. Functionally, catalyzes the reversible transfer of the terminal phosphate group between ATP and AMP. Plays an important role in cellular energy homeostasis and in adenine nucleotide metabolism. In Shouchella clausii (strain KSM-K16) (Alkalihalobacillus clausii), this protein is Adenylate kinase.